The sequence spans 71 residues: Large ribosomal subunit protein bL31 (71 aa).

Zn(2+)-binding residues include cysteine 16, cysteine 18, cysteine 37, and cysteine 40.

This sequence belongs to the bacterial ribosomal protein bL31 family. Type A subfamily. As to quaternary structure, part of the 50S ribosomal subunit. The cofactor is Zn(2+).

In terms of biological role, binds the 23S rRNA. This Pseudomonas entomophila (strain L48) protein is Large ribosomal subunit protein bL31.